Reading from the N-terminus, the 94-residue chain is Large ribosomal subunit protein bL25 (94 aa).

Belongs to the bacterial ribosomal protein bL25 family. Part of the 50S ribosomal subunit; part of the 5S rRNA/L5/L18/L25 subcomplex. Contacts the 5S rRNA. Binds to the 5S rRNA independently of L5 and L18.

This is one of the proteins that binds to the 5S RNA in the ribosome where it forms part of the central protuberance. The sequence is that of Large ribosomal subunit protein bL25 from Shigella boydii serotype 18 (strain CDC 3083-94 / BS512).